The sequence spans 333 residues: tRNA N6-adenosine threonylcarbamoyltransferase (333 aa).

Residues His111 and His115 each contribute to the Fe cation site. Substrate is bound by residues 134 to 138 (LVSGG), Asp167, Gly180, and Asn272. Residue Asp300 coordinates Fe cation.

The protein belongs to the KAE1 / TsaD family. It depends on Fe(2+) as a cofactor.

It localises to the cytoplasm. It catalyses the reaction L-threonylcarbamoyladenylate + adenosine(37) in tRNA = N(6)-L-threonylcarbamoyladenosine(37) in tRNA + AMP + H(+). In terms of biological role, required for the formation of a threonylcarbamoyl group on adenosine at position 37 (t(6)A37) in tRNAs that read codons beginning with adenine. Is involved in the transfer of the threonylcarbamoyl moiety of threonylcarbamoyl-AMP (TC-AMP) to the N6 group of A37, together with TsaE and TsaB. TsaD likely plays a direct catalytic role in this reaction. The polypeptide is tRNA N6-adenosine threonylcarbamoyltransferase (Legionella pneumophila (strain Corby)).